The sequence spans 513 residues: MQLNSTEISELIKQRIAQFNVVSEAHNEGTIVSVSDGVIRIHGLADCMQGEMISLPGNRYAIALNLERDSVGAVVMGPYADLAEGMKVKCTGRILEVPVGRGLLGRVVNTLGAPIDGKGPVDNDGFSAVEAIAPGVIDRQSVDQPVQTGYKAVDSMIPIGRGQRELIIGDRQTGKTALAIDAIINQRDSGIKCIYVAIGQKASTISNVVRKLEEHGALANTIVVVATASESAALQYLAPYAGCAMGEYFRDRGEDALIIYDDLSKQAVAYRQISLLLRRPPGREAFPGDVFYLHSRLLERAARVNADYVEAFTKGEVKGRTGSLTALPIIETQAGDVSAFVPTNVISITDGQIFLESNLFNAGIRPAVNPGISVSRVGGAAQTKIMKKLSGGIRTALAQYRELAAFSQFASDLDDATRKQLDHGQKVTELLKQKQYAPMSVAQQSLVLFAAERGYLADVELAKIGSFEAALLAYVDRDHAPLMQEINQSGGYNDEIEGKLKGILDSFKATQSW.

Position 169 to 176 (169 to 176 (GDRQTGKT)) interacts with ATP.

Belongs to the ATPase alpha/beta chains family. In terms of assembly, F-type ATPases have 2 components, CF(1) - the catalytic core - and CF(0) - the membrane proton channel. CF(1) has five subunits: alpha(3), beta(3), gamma(1), delta(1), epsilon(1). CF(0) has three main subunits: a(1), b(2) and c(9-12). The alpha and beta chains form an alternating ring which encloses part of the gamma chain. CF(1) is attached to CF(0) by a central stalk formed by the gamma and epsilon chains, while a peripheral stalk is formed by the delta and b chains.

The protein resides in the cell inner membrane. It carries out the reaction ATP + H2O + 4 H(+)(in) = ADP + phosphate + 5 H(+)(out). In terms of biological role, produces ATP from ADP in the presence of a proton gradient across the membrane. The alpha chain is a regulatory subunit. This Salmonella paratyphi C (strain RKS4594) protein is ATP synthase subunit alpha.